Reading from the N-terminus, the 294-residue chain is Mitochondrial glycine transporter (294 aa).

3 Solcar repeats span residues 5–84 (RRAT…IRQA), 102–186 (LNMY…MKVL), and 208–292 (ASTL…IVKK). The next 6 membrane-spanning stretches (helical) occupy residues 11-36 (LIGG…TRLQ), 59-85 (GALP…RQAI), 108-133 (MFSG…VRYE), 161-184 (GFGA…DRMK), 212-238 (INGS…KTRM), and 267-285 (GISL…AWGI).

It belongs to the mitochondrial carrier (TC 2.A.29) family. SLC25A38 subfamily.

It is found in the mitochondrion inner membrane. The enzyme catalyses glycine(in) = glycine(out). Functionally, mitochondrial glycine transporter that imports glycine into the mitochondrial matrix. Plays an important role in providing glycine for the first enzymatic step in heme biosynthesis, the condensation of glycine with succinyl-CoA to produce 5-aminolevulinate (ALA) in the mitochondrial matrix. This chain is Mitochondrial glycine transporter, found in Kluyveromyces lactis (strain ATCC 8585 / CBS 2359 / DSM 70799 / NBRC 1267 / NRRL Y-1140 / WM37) (Yeast).